A 404-amino-acid polypeptide reads, in one-letter code: Probable glucan endo-1,6-beta-glucosidase B (404 aa).

An N-terminal signal peptide occupies residues 1–20 (MTTYQTLFLIPLAISTLVTA). N-linked (GlcNAc...) asparagine glycans are attached at residues Asn-33 and Asn-130. The active-site Proton donor is the Glu-222. 2 N-linked (GlcNAc...) asparagine glycosylation sites follow: Asn-253 and Asn-299. Glu-324 (nucleophile) is an active-site residue.

It belongs to the glycosyl hydrolase 5 (cellulase A) family.

The protein resides in the secreted. It carries out the reaction Random hydrolysis of (1-&gt;6)-linkages in (1-&gt;6)-beta-D-glucans.. Beta-glucanases participate in the metabolism of beta-glucan, the main structural component of the cell wall. Acts on lutean, pustulan and 1,6-oligo-beta-D-glucosides. This is Probable glucan endo-1,6-beta-glucosidase B (exgB) from Aspergillus terreus (strain NIH 2624 / FGSC A1156).